Here is a 134-residue protein sequence, read N- to C-terminus: Perlwapin (134 aa).

3 consecutive WAP domains span residues Gly2–Lys45, Pro46–Glu89, and Lys90–Cys132. Disulfide bonds link Cys8–Cys34, Cys17–Cys38, Cys21–Cys33, Cys27–Cys42, Cys51–Cys77, Cys59–Cys82, Cys64–Cys76, Cys70–Cys85, Cys94–Cys121, Cys104–Cys124, Cys108–Cys120, and Cys114–Cys128.

As to expression, nacreous layer of shell.

Inhibits growth of calcium carbonate crystals. May inhibit growth of certain crystallographic planes in the mineral phase of nacre in the shell. This Haliotis laevigata (Smooth Australian abalone) protein is Perlwapin.